A 778-amino-acid chain; its full sequence is Endonuclease MutS2 (778 aa).

Residue 328–335 (GPNTGGKT) participates in ATP binding. Residues 702 to 777 (LDLRGKRYEE…GSGATIVTFK (76 aa)) form the Smr domain.

This sequence belongs to the DNA mismatch repair MutS family. MutS2 subfamily. In terms of assembly, homodimer. Binds to stalled ribosomes, contacting rRNA.

Endonuclease that is involved in the suppression of homologous recombination and thus may have a key role in the control of bacterial genetic diversity. Functionally, acts as a ribosome collision sensor, splitting the ribosome into its 2 subunits. Detects stalled/collided 70S ribosomes which it binds and splits by an ATP-hydrolysis driven conformational change. Acts upstream of the ribosome quality control system (RQC), a ribosome-associated complex that mediates the extraction of incompletely synthesized nascent chains from stalled ribosomes and their subsequent degradation. Probably generates substrates for RQC. This is Endonuclease MutS2 from Streptococcus pneumoniae (strain JJA).